The primary structure comprises 284 residues: Sulfotransferase 4A1 (284 aa).

T8, T11, and T205 each carry phosphothreonine.

It belongs to the sulfotransferase 1 family. In terms of tissue distribution, highly expressed in the cerebral cortex and frontal lobe, slightly less in the cerebellum, occipital and temporal lobes, relatively low in the medulla and putamen, and lowest in the spinal cord. No expression detected in the pancreas. Highly expressed in fetal brain and occipital lobe, slightly less in the whole brain, frontal lobe, hippocampus, and lung, very low expression in cerebellum, medulla oblongata, temporal lobe, testis, kidney and appendix.

Its subcellular location is the cytoplasm. Functionally, atypical sulfotransferase family member with very low affinity for 3'-phospho-5'-adenylyl sulfate (PAPS) and very low catalytic activity towards L-triiodothyronine, thyroxine, estrone, p-nitrophenol, 2-naphthylamine, and 2-beta-naphthol. May have a role in the metabolism of drugs and neurotransmitters in the CNS. The protein is Sulfotransferase 4A1 (SULT4A1) of Homo sapiens (Human).